The primary structure comprises 1844 residues: ATPase family AAA domain-containing protein 5 (1844 aa).

Residue Ser44 is modified to Phosphoserine. Lys127 is covalently cross-linked (Glycyl lysine isopeptide (Lys-Gly) (interchain with G-Cter in SUMO2)). Residues Gln178–Lys199 are compositionally biased toward polar residues. The tract at residues Gln178 to Lys204 is disordered. A phosphoserine mark is found at Ser219, Ser306, Ser311, Ser354, and Ser369. Residues Lys368–Glu384 form an interaction with WDR48 region. Disordered regions lie at residues Lys477–Asn499, Glu580–Leu623, and Lys658–Ile700. Composition is skewed to polar residues over residues Glu580–Lys592 and Arg599–Thr608. Residues Ser602, Ser614, and Ser621 each carry the phosphoserine modification. Residues Thr664–Asn673 are compositionally biased toward basic residues. Residues Gly685 to Ile700 show a composition bias toward polar residues. Phosphoserine is present on Ser817. Composition is skewed to basic and acidic residues over residues Leu987 to Lys1032 and Arg1092 to Phe1106. Disordered regions lie at residues Leu987 to Ser1047 and Arg1092 to Asp1118. Position 1116 is a phosphoserine (Ser1116). Gly1132 to Thr1139 lines the ATP pocket. Disordered regions lie at residues Lys1203–Lys1235 and Ile1272–Glu1292. A compositionally biased stretch (polar residues) spans Ile1272–Val1285. Positions Leu1428–Glu1432 match the LXCXE motif motif. Residues Ser1591–Gly1635 are disordered. Residues Glu1602 to Lys1624 are compositionally biased toward basic and acidic residues. The interaction with RAD51 and RFC5 stretch occupies residues Pro1630 to Lys1719.

This sequence belongs to the AAA ATPase family. Component of a heteropentameric replication factor ATAD5 RFC-like complex composed of one large subunit (ATAD5) and four small subunits (RFC2, RFC3, RFC4 and RFC5). Within the ATAD5 RFC-like complex, interacts with RFC2, RFC4 and RFC5. Within the ATAD5 RFC-like complex, interacts directly via-N terminal with RAD51; the interactions is enhanced under replication stress. Interacts with RB1 predominantly in G1 phase via its LXCXE motif. Interacts with RAD9A in growing cells. The interaction with RAD9A is reduced after exposure to DNA replication-inhibiting agents. Interacts with BRD4. Interacts with PCNA. Interacts with deubiquitinating enzyme USP1, and its associated factor, WDR48. ATR may stimulate the RAD9A dissociation.

Its subcellular location is the nucleus. Its function is as follows. Has an important role in DNA replication and in maintaining genome integrity during replication stress. Involved in a RAD9A-related damage checkpoint, a pathway that is important in determining whether DNA damage is compatible with cell survival or whether it requires cell elimination by apoptosis. Modulates the RAD9A interaction with BCL2 and thereby induces DNA damage-induced apoptosis. Promotes PCNA deubiquitination by recruiting the ubiquitin-specific protease 1 (USP1) and WDR48 thereby down-regulating the error-prone damage bypass pathway. As component of the ATAD5 RFC-like complex, regulates the function of the DNA polymerase processivity factor PCNA by unloading the ring-shaped PCNA homotrimer from DNA after replication during the S phase of the cell cycle. This seems to be dependent on its ATPase activity. Plays important roles in restarting stalled replication forks under replication stress, by unloading the PCNA homotrimer from DNA and recruiting RAD51 possibly through an ATR-dependent manner. Ultimately this enables replication fork regression, breakage, and eventual fork restart. Both the PCNA unloading activity and the interaction with WDR48 are required to efficiently recruit RAD51 to stalled replication forks. Promotes the generation of MUS81-mediated single-stranded DNA-associated breaks in response to replication stress, which is an alternative pathway to restart stalled/regressed replication forks. The protein is ATPase family AAA domain-containing protein 5 of Homo sapiens (Human).